The sequence spans 608 residues: Translation initiation factor RLI1 (608 aa).

2 consecutive 4Fe-4S ferredoxin-type domains span residues 7–39 (RIAI…KLCI) and 46–75 (KIAF…IINL). ABC transporter domains lie at 70-320 (IQII…FLDG) and 345-568 (LQND…LKNL). 110–117 (GTNGIGKS) serves as a coordination point for ATP. Ser349 is modified (phosphoserine). 385-392 (GENGTGKT) provides a ligand contact to ATP.

Belongs to the ABC transporter superfamily. ABCE family. As to quaternary structure, component of the multifactor complex (MFC) composed of at least RLI1, the eIF2 subunit SUI2, TIF5/eIF5, and the eIF3 subunits PRT1, HCR1, NIP1, RPG1, TIF34 and TIF35. The complex associates with pre-initiation complexes. Interacts with the complex YAE1:LTO1; the complex bridges the interaction between the CIA complex and RLI1.

It is found in the cytoplasm. Its subcellular location is the nucleus. Functionally, component of the multifactor complex (MFC) involved in translation initiation. Required for the binding of MFC to the 40S ribosome. Required for the processing and nuclear export of the 60S and 40S ribosomal subunits. The polypeptide is Translation initiation factor RLI1 (RLI1) (Saccharomyces cerevisiae (strain ATCC 204508 / S288c) (Baker's yeast)).